A 363-amino-acid chain; its full sequence is Protein RecA (363 aa).

Residue 78–85 (GPESGGKT) coordinates ATP.

It belongs to the RecA family.

The protein resides in the cytoplasm. Can catalyze the hydrolysis of ATP in the presence of single-stranded DNA, the ATP-dependent uptake of single-stranded DNA by duplex DNA, and the ATP-dependent hybridization of homologous single-stranded DNAs. It interacts with LexA causing its activation and leading to its autocatalytic cleavage. Probably involved in base excision repair. In terms of biological role, following severe irradiation (7 kGy of gamma irradiation) genomic DNA is fragmented. DNA is progressively degraded for the first 1.5 hours after IR, in a step promoted by RecA and counterbalanced by DNA Pol I and Pol III, followed by massive DNA synthesis and genome reassembly in the next hour. Optimal priming of DNA synthesis requires both RecA and RadA, Pol III initiates DNA synthesis while both Pol I and Pol III are required for its continuation. In the absence of RecA the majority of the chromosome is still reconstituted, via either single-strand annealing or non-homologous end joining. The chain is Protein RecA from Deinococcus radiodurans (strain ATCC 13939 / DSM 20539 / JCM 16871 / CCUG 27074 / LMG 4051 / NBRC 15346 / NCIMB 9279 / VKM B-1422 / R1).